The following is a 176-amino-acid chain: MDLPGPIHDFLLVFLGSGLILGGLGVVLLTNPIYSAFSLGLVLVCISLFYIPSNSHFVAAAQLLIYVGAINVLIIFAVMFMNGSEYYNDFHLWTVGDGVTSLLCTSIFVSLITTIPDTSWYGVIWTTRSNQIIEQDLISNGQQIGIHLSTDFFLPFELISIILLVALIGAIAMARQ.

Helical transmembrane passes span 10–30 (FLLV…VLLT), 32–52 (PIYS…FYIP), 61–81 (AQLL…VMFM), 92–112 (LWTV…VSLI), and 152–172 (FFLP…GAIA).

The protein belongs to the complex I subunit 6 family. As to quaternary structure, NDH is composed of at least 16 different subunits, 5 of which are encoded in the nucleus.

It is found in the plastid. The protein resides in the chloroplast thylakoid membrane. It carries out the reaction a plastoquinone + NADH + (n+1) H(+)(in) = a plastoquinol + NAD(+) + n H(+)(out). It catalyses the reaction a plastoquinone + NADPH + (n+1) H(+)(in) = a plastoquinol + NADP(+) + n H(+)(out). Its function is as follows. NDH shuttles electrons from NAD(P)H:plastoquinone, via FMN and iron-sulfur (Fe-S) centers, to quinones in the photosynthetic chain and possibly in a chloroplast respiratory chain. The immediate electron acceptor for the enzyme in this species is believed to be plastoquinone. Couples the redox reaction to proton translocation, and thus conserves the redox energy in a proton gradient. The protein is NAD(P)H-quinone oxidoreductase subunit 6, chloroplastic (ndhG) of Platanus occidentalis (Sycamore).